A 667-amino-acid polypeptide reads, in one-letter code: Probable potassium transport system protein Kup (667 aa).

12 helical membrane passes run 16–36, 58–78, 101–121, 146–166, 167–187, 221–241, 253–273, 294–314, 343–363, 373–393, 399–419, and 424–444; these read GFIIALGIVYGDIGTSPLYTM, VSLIIWTLTLVTTIKYVLIAL, WLIIPAMLGGATLLSDGALTP, TNVILTTLLILMVLFGLQRFG, TGVIGKLFGPVMLVWFSVLGI, IFILGSIFLATTGAEALYSDL, WPFVKVCIILSYCGQAAWILA, VYLVILATLAAIIASQALISG, LYIPVINWSLFAVTSCTVLYF, YGLAITITMLMTTILLAYYLI, PLLASLLMAFFAFIEFIFFLA, and FMHGGYVVVVLALAIVFVMVI.

It belongs to the HAK/KUP transporter (TC 2.A.72) family.

It localises to the cell membrane. It catalyses the reaction K(+)(in) + H(+)(in) = K(+)(out) + H(+)(out). Its function is as follows. Transport of potassium into the cell. Likely operates as a K(+):H(+) symporter. The sequence is that of Probable potassium transport system protein Kup from Streptococcus equi subsp. equi (strain 4047).